The chain runs to 179 residues: Tetratricopeptide repeat protein 36 (179 aa).

3 TPR repeats span residues 43-76 (SSQL…CPLN), 77-110 (PSAY…AGPK), and 115-148 (CQAY…GSSF).

Belongs to the TTC36 family.

The protein is Tetratricopeptide repeat protein 36 of Caenorhabditis briggsae.